The sequence spans 260 residues: Cystine transporter (260 aa).

The PQ-loop 1 domain maps to 1 to 67 (MVSLDDILGI…QLYCWKMTGD (67 aa)). 5 consecutive transmembrane segments (helical) span residues 7–28 (ILGI…ITNW), 40–62 (FVML…LYCW), 81–102 (FWYC…VAGA), 118–138 (WYLR…VQFM), and 151–175 (TLAY…PQVT). The PQ-loop 2 domain maps to 162–212 (KISMSLIKYIPQVTHNSTRKSMDCFPIQGVFLDVTGGIASLLQLIWQLSND). An N-linked (GlcNAc...) asparagine glycan is attached at Asn177. The next 2 helical transmembrane spans lie at 185-205 (CFPI…LLQL) and 227-247 (VGLS…WFVY).

This sequence belongs to the cystinosin family.

Its subcellular location is the endosome membrane. The protein resides in the vacuole membrane. It catalyses the reaction L-cystine(out) + H(+)(out) = L-cystine(in) + H(+)(in). In terms of biological role, cystine/H(+) symporter that mediates export of cystine, the oxidized dimer of cysteine, from vacuoles/endodomes. In Saccharomyces cerevisiae (strain ATCC 204508 / S288c) (Baker's yeast), this protein is Cystine transporter (ERS1).